The following is a 201-amino-acid chain: Orotate phosphoribosyltransferase (201 aa).

113–121 contributes to the 5-phospho-alpha-D-ribose 1-diphosphate binding site; the sequence is EDIITTGKS. The orotate site is built by T117 and R145.

It belongs to the purine/pyrimidine phosphoribosyltransferase family. PyrE subfamily. Homodimer. Mg(2+) serves as cofactor.

It catalyses the reaction orotidine 5'-phosphate + diphosphate = orotate + 5-phospho-alpha-D-ribose 1-diphosphate. The protein operates within pyrimidine metabolism; UMP biosynthesis via de novo pathway; UMP from orotate: step 1/2. In terms of biological role, catalyzes the transfer of a ribosyl phosphate group from 5-phosphoribose 1-diphosphate to orotate, leading to the formation of orotidine monophosphate (OMP). In Helicobacter pylori (strain G27), this protein is Orotate phosphoribosyltransferase.